Consider the following 521-residue polypeptide: Proactivator polypeptide-like 1 (521 aa).

A signal peptide spans Met-1–Ala-17. Positions Ser-18–Ala-59 are excised as a propeptide. Residues Pro-19–Ala-59 enclose the Saposin A-type 1 domain. Saposin B-type domains are found at residues Lys-60–Gln-144 and Glu-180–Gly-258. 3 disulfides stabilise this stretch: Cys-64–Cys-140, Cys-67–Cys-134, and Cys-95–Cys-107. Residues His-146–Glu-180 constitute a propeptide that is removed on maturation. Intrachain disulfides connect Cys-184/Cys-254, Cys-187/Cys-248, and Cys-213/Cys-224. Asn-201 carries an N-linked (GlcNAc...) asparagine glycan. Residues Ala-259 to Met-288 constitute a propeptide that is removed on maturation. Saposin B-type domains lie at Ala-290–Arg-370 and Gln-392–Arg-473. 3 disulfide bridges follow: Cys-294-Cys-366, Cys-297-Cys-360, and Cys-325-Cys-336. N-linked (GlcNAc...) asparagine glycosylation is present at Asn-311. Positions Arg-370–Asn-391 are excised as a propeptide. 3 disulfides stabilise this stretch: Cys-396–Cys-469, Cys-399–Cys-463, and Cys-427–Cys-438. The propeptide occupies Thr-474–Ala-521. A Saposin A-type 2 domain is found at Pro-475 to Leu-515.

It is found in the secreted. Functionally, may activate the lysosomal degradation of sphingolipids. This chain is Proactivator polypeptide-like 1 (PSAPL1), found in Homo sapiens (Human).